The following is a 356-amino-acid chain: Trans-enoyl reductase pgmF (356 aa).

NADP(+) contacts are provided by residues 57–60 (VDFK), 175–178 (SGGC), 198–201 (STPN), Y216, 261–262 (VG), and 342–343 (AK).

Belongs to the zinc-containing alcohol dehydrogenase family.

Functionally, FAD-linked oxidoreductase; part of the gene cluster that mediates the biosynthesis of pleosporalin A, ascomycone A, as well as a third cryptic naphthoquinone derived pigment, all responsible for the coloration of conidia. The pathway begins with the biosynthesis of the cyclized heptaketide 3-acetonyl-1,6,8-trihydroxy-2-naphthaldehyde by the NR-PKS pgmA. The C-6 hydroxyl group is further methylated by the O-methyltransferase pgmB to yield fusarubinaldehyde which is in turn oxidized by the cytochrome P450 monooxygenase pgmC at C-9. The C-1 hydroxyl group is then methylated spontaneously. Although pgmE, pgmD and pgmH are essential for the production of pleosporalin A, it is not the case for the 2 other final products and it remains difficult to assign a specific function to each enzyme. PgmF and pgmG seem not to be involved in pigment biosynthesis although they were regulated by the cluster-specific transcription factor pgmR. In Aspergillus terreus, this protein is Trans-enoyl reductase pgmF.